The primary structure comprises 199 residues: Outer-membrane lipoprotein LolB (199 aa).

Positions 1-28 (MAAAGSLCQTAWRVRGWLAAGLCALLAG) are cleaved as a signal peptide. Cysteine 29 carries the N-palmitoyl cysteine lipid modification. Cysteine 29 is lipidated: S-diacylglycerol cysteine.

This sequence belongs to the LolB family. In terms of assembly, monomer.

It is found in the cell outer membrane. Functionally, plays a critical role in the incorporation of lipoproteins in the outer membrane after they are released by the LolA protein. The chain is Outer-membrane lipoprotein LolB from Bordetella petrii (strain ATCC BAA-461 / DSM 12804 / CCUG 43448).